The following is a 300-amino-acid chain: Uricase (300 aa).

Ala2 bears the N-acetylalanine mark. Lys6 and Lys19 each carry N6-acetyllysine; alternate. N6-succinyllysine; alternate occurs at positions 6 and 19. The Charge relay system role is filled by Lys19. Residues Lys23 and Lys32 each carry the N6-acetyllysine modification. Residues Ser35 and Ser59 each carry the phosphoserine modification. Catalysis depends on Thr64, which acts as the Charge relay system. Thr64 and Asp65 together coordinate urate. N6-acetyllysine is present on residues Lys114, Lys118, and Lys160. Residue Phe166 participates in urate binding. An N6-acetyllysine mark is found at Lys171 and Lys181. Position 183 (Arg183) interacts with urate. N6-acetyllysine; alternate is present on residues Lys217 and Lys224. N6-succinyllysine; alternate occurs at positions 217 and 224. Ser228 carries the phosphoserine modification. 3 residues coordinate urate: Val231, Gln232, and Asn258. His260 acts as the Charge relay system in catalysis. The residue at position 274 (Lys274) is an N6-acetyllysine. Tyr285 bears the Phosphotyrosine mark. Residues 298 to 300 carry the Microbody targeting signal motif; the sequence is SRL.

The protein belongs to the uricase family.

It localises to the peroxisome. The catalysed reaction is urate + O2 + H2O = 5-hydroxyisourate + H2O2. It participates in purine metabolism; urate degradation; (S)-allantoin from urate: step 1/3. In terms of biological role, catalyzes the oxidation of uric acid to 5-hydroxyisourate, which is further processed to form (S)-allantoin. This chain is Uricase (UOX), found in Oryctolagus cuniculus (Rabbit).